Consider the following 286-residue polypeptide: MADNPLWHETLHDHFGQYFSVDNVLYHEKTDHQDLIIFDNRAFGRVMALDGVVQTTERDEFIYHEMMTHVPLLAHGNAKHVLIIGGGDGAMLREVSRHRSIETITMVEIDAGVVSFCRQYLPNHNAGAYDDPRFTLVIDDGVNFVNQTTQTFDVIISDCTDPIGPGESLFTSAFYEGCKRCLNPGGIFVAQNGVCFLQQDEAVGSHRKLSHYFRDVSFYQAAIPTYYGGIMTFAWASDNEALRHLSSEIIQARFHKANLTCRYYNPAIHTAAFALPQYLHDALSAP.

Residues Pro5–Asp238 enclose the PABS domain. Position 33 (Gln33) interacts with S-methyl-5'-thioadenosine. Residues His64 and Asp88 each contribute to the spermidine site. S-methyl-5'-thioadenosine is bound by residues Glu108 and Asp140–Gly141. The active-site Proton acceptor is Asp158. Spermidine is bound at residue Asp158 to Asp161. Pro165 serves as a coordination point for S-methyl-5'-thioadenosine.

Belongs to the spermidine/spermine synthase family. In terms of assembly, homodimer or homotetramer.

It localises to the cytoplasm. It carries out the reaction S-adenosyl 3-(methylsulfanyl)propylamine + putrescine = S-methyl-5'-thioadenosine + spermidine + H(+). The protein operates within amine and polyamine biosynthesis; spermidine biosynthesis; spermidine from putrescine: step 1/1. Functionally, catalyzes the irreversible transfer of a propylamine group from the amino donor S-adenosylmethioninamine (decarboxy-AdoMet) to putrescine (1,4-diaminobutane) to yield spermidine. The protein is Polyamine aminopropyltransferase of Klebsiella pneumoniae subsp. pneumoniae (strain ATCC 700721 / MGH 78578).